The sequence spans 89 residues: MAKKSKVAKHEHQQALVEQYAELRRTLKAEGRFDELRKLPRDSSPTRLHNRCELTGRPHGYMRKFGMSRIRFRELAHQGQLPGVKKASW.

Belongs to the universal ribosomal protein uS14 family. Part of the 30S ribosomal subunit. Contacts proteins S3 and S10.

Functionally, binds 16S rRNA, required for the assembly of 30S particles and may also be responsible for determining the conformation of the 16S rRNA at the A site. The polypeptide is Small ribosomal subunit protein uS14A (Listeria innocua serovar 6a (strain ATCC BAA-680 / CLIP 11262)).